The following is a 277-amino-acid chain: Inhibition of morphological differentiation protein (277 aa).

Residues Asp18, Asp20, and Asp192 each contribute to the Mg(2+) site.

The protein belongs to the HAD-like hydrolase superfamily. SerB family.

In Streptomyces azureus, this protein is Inhibition of morphological differentiation protein.